The primary structure comprises 134 residues: DNA-binding protein H-NS, plasmid (134 aa).

Residues 23–67 (LEILEELLEKLSVVVEERRQEESSKEAELKARLEKIESLRQLMLE) are a coiled coil. The disordered stretch occupies residues 77–96 (SSFSAKSGAPKKVREPRPAK). Residues 112-117 (QGRTPK) mediate DNA binding.

The protein belongs to the histone-like protein H-NS family. As to quaternary structure, homodimer that oligomerizes on DNA into higher-order complexes that form bridges between disparate regions of DNA compacting it. Interacts with Hha, YdgT and StpA.

The protein resides in the cytoplasm. It is found in the nucleoid. Functionally, a DNA-binding protein implicated in transcriptional repression and chromosome organization and compaction. Binds DNA, modifying gene expression, especially non-core genes. Does not regulate the same set of genes as its chromosomal counterpart (tested in S.typhimurium strain SL1344 / SV5015, chromosomal H-NS protein is AC A0A0H3NBY9). Thus it has a not-completely overlapping set of gene targets compared to its chromosomal homolog; many of these target genes are either plasmid-encoded or acquired by horizontally transferred genes (HTG). This protein can function in the absence of H-NS-modulating protein Hha (either chromosomal or plasmid-encoded), although many HTG genes are regulated by an H-NS/Hha complex. Binds nucleation sites in AT-rich DNA and bridges them, forming higher-order nucleoprotein complexes and condensing the chromosome. A subset of genes are repressed by H-NS in association with Hha and/or Cnu (ydgT). The chain is DNA-binding protein H-NS, plasmid (hns) from Salmonella typhi.